The primary structure comprises 387 residues: Succinate--CoA ligase [ADP-forming] subunit beta (387 aa).

The 237-residue stretch at 9–245 (KDLLESYGLK…KSQENAKELK (237 aa)) folds into the ATP-grasp domain. ATP is bound by residues Lys46, 53-55 (GRG), Glu100, Tyr103, and Glu108. The Mg(2+) site is built by Asn200 and Asp214. Substrate-binding positions include Asn265 and 322-324 (GIV).

Belongs to the succinate/malate CoA ligase beta subunit family. In terms of assembly, heterotetramer of two alpha and two beta subunits. Mg(2+) is required as a cofactor.

It catalyses the reaction succinate + ATP + CoA = succinyl-CoA + ADP + phosphate. The catalysed reaction is GTP + succinate + CoA = succinyl-CoA + GDP + phosphate. It functions in the pathway carbohydrate metabolism; tricarboxylic acid cycle; succinate from succinyl-CoA (ligase route): step 1/1. Its function is as follows. Succinyl-CoA synthetase functions in the citric acid cycle (TCA), coupling the hydrolysis of succinyl-CoA to the synthesis of either ATP or GTP and thus represents the only step of substrate-level phosphorylation in the TCA. The beta subunit provides nucleotide specificity of the enzyme and binds the substrate succinate, while the binding sites for coenzyme A and phosphate are found in the alpha subunit. This chain is Succinate--CoA ligase [ADP-forming] subunit beta, found in Francisella tularensis subsp. mediasiatica (strain FSC147).